The following is a 41-amino-acid chain: Giant hemoglobin AI chain (41 aa).

One can recognise a Globin domain in the interval 2–41 (DCGMLQRIKVKQQWASVYSSGIAREDFGEAIWKAVFALAP).

This sequence belongs to the globin family. In terms of assembly, giant hemoglobin is composed of four heme-containing chains (AI to AIV), and two linker chains (AV and AVI).

The chain is Giant hemoglobin AI chain from Lamellibrachia sp. (Deep-sea giant tube worm).